The sequence spans 556 residues: Melanoma-associated antigen B4 (556 aa).

Basic residues predominate over residues 1–15; it reads MPRGQKSKARAREKR. The interval 1–110 is disordered; that stretch reads MPRGQKSKAR…RFSENPQNDL (110 aa). Residues 39–73 show a composition bias toward polar residues; that stretch reads PSCSNQDSGDAVASTSTAGFPQKSKSQGEAPTTTA. A compositionally biased stretch (basic residues) spans 77–87; the sequence is GACRRSRKSTR. The MAGE domain occupies 111–310; sequence LTRKTGMLMQ…QAFPTHYEEA (200 aa). A disordered region spans residues 315 to 335; it reads EERAQAEAVGSPGTSAKDKAE. A Phosphoserine modification is found at S325. 15 tandem repeats follow at residues 334–348, 349–363, 364–378, 379–392, 393–407, 408–421, 422–436, 437–451, 452–466, 467–480, 481–495, 496–510, 511–525, 526–539, and 540–554. A 15 X 15 AA approximate tandem repeats region spans residues 334 to 554; it reads AEAKVTLVDS…PLVDSSGKDK (221 aa).

In terms of tissue distribution, expressed in testis (at protein level).

The protein resides in the cytoplasm. The polypeptide is Melanoma-associated antigen B4 (Mus musculus (Mouse)).